The primary structure comprises 139 residues: Nucleoside diphosphate kinase (139 aa).

Positions 9, 57, 85, 91, 102, and 112 each coordinate ATP. Histidine 115 functions as the Pros-phosphohistidine intermediate in the catalytic mechanism.

It belongs to the NDK family. Homotetramer. The cofactor is Mg(2+).

The protein localises to the cytoplasm. The enzyme catalyses a 2'-deoxyribonucleoside 5'-diphosphate + ATP = a 2'-deoxyribonucleoside 5'-triphosphate + ADP. It catalyses the reaction a ribonucleoside 5'-diphosphate + ATP = a ribonucleoside 5'-triphosphate + ADP. Major role in the synthesis of nucleoside triphosphates other than ATP. The ATP gamma phosphate is transferred to the NDP beta phosphate via a ping-pong mechanism, using a phosphorylated active-site intermediate. This is Nucleoside diphosphate kinase from Neorickettsia sennetsu (strain ATCC VR-367 / Miyayama) (Ehrlichia sennetsu).